Here is a 362-residue protein sequence, read N- to C-terminus: Sulfate/thiosulfate import ATP-binding protein CysA (362 aa).

The ABC transporter domain maps to 13–243 (ITVRDAYKRY…PTNAFVMSFL (231 aa)). 45–52 (GPSGSGKS) serves as a coordination point for ATP.

Belongs to the ABC transporter superfamily. Sulfate/tungstate importer (TC 3.A.1.6) family. In terms of assembly, the complex is composed of two ATP-binding proteins (CysA), two transmembrane proteins (CysT and CysW) and a solute-binding protein (CysP).

It localises to the cell membrane. The enzyme catalyses sulfate(out) + ATP + H2O = sulfate(in) + ADP + phosphate + H(+). It carries out the reaction thiosulfate(out) + ATP + H2O = thiosulfate(in) + ADP + phosphate + H(+). Its function is as follows. Part of the ABC transporter complex CysAWTP involved in sulfate/thiosulfate import. Responsible for energy coupling to the transport system. This chain is Sulfate/thiosulfate import ATP-binding protein CysA, found in Mycolicibacterium paratuberculosis (strain ATCC BAA-968 / K-10) (Mycobacterium paratuberculosis).